A 518-amino-acid chain; its full sequence is Chromosomal replication initiator protein DnaA (518 aa).

The interval 1–72 (MNEFWQHCSA…DLARDFWHSP (72 aa)) is domain I, interacts with DnaA modulators. The segment at 72 to 181 (PVDVQFVLDP…GESDSTYERS (110 aa)) is domain II. Residues 155 to 178 (AAARRTWRPGAAAQAAGGESDSTY) are disordered. The segment at 182-398 (KLNPVLTFDN…GALRKILAYS (217 aa)) is domain III, AAA+ region. The ATP site is built by glycine 226, glycine 228, lysine 229, and threonine 230. The tract at residues 399-518 (KFHGREITIE…LHVLEQTLKG (120 aa)) is domain IV, binds dsDNA.

Belongs to the DnaA family. Oligomerizes as a right-handed, spiral filament on DNA at oriC.

Its subcellular location is the cytoplasm. In terms of biological role, plays an essential role in the initiation and regulation of chromosomal replication. ATP-DnaA binds to the origin of replication (oriC) to initiate formation of the DNA replication initiation complex once per cell cycle. Binds the DnaA box (a 9 base pair repeat at the origin) and separates the double-stranded (ds)DNA. Forms a right-handed helical filament on oriC DNA; dsDNA binds to the exterior of the filament while single-stranded (ss)DNA is stabiized in the filament's interior. The ATP-DnaA-oriC complex binds and stabilizes one strand of the AT-rich DNA unwinding element (DUE), permitting loading of DNA polymerase. After initiation quickly degrades to an ADP-DnaA complex that is not apt for DNA replication. Binds acidic phospholipids. This Paraburkholderia phymatum (strain DSM 17167 / CIP 108236 / LMG 21445 / STM815) (Burkholderia phymatum) protein is Chromosomal replication initiator protein DnaA.